Here is a 70-residue protein sequence, read N- to C-terminus: Probable rubredoxin HupI (70 aa).

The Rubredoxin-like domain maps to 15–66; it reads DDRMECGICWHVYDPAEGDPVWQIPPGTPFSNLTEDWRCPNCDALQSKFMRL. 4 residues coordinate Fe cation: Cys20, Cys23, Cys53, and Cys56.

This sequence belongs to the rubredoxin family. The cofactor is Fe(3+).

In terms of biological role, could be an electron transport intermediate in hydrogen oxidation. The protein is Probable rubredoxin HupI (hupI) of Rhizobium leguminosarum bv. viciae.